The sequence spans 275 residues: Urease accessory protein UreD (275 aa).

The protein belongs to the UreD family. As to quaternary structure, ureD, UreF and UreG form a complex that acts as a GTP-hydrolysis-dependent molecular chaperone, activating the urease apoprotein by helping to assemble the nickel containing metallocenter of UreC. The UreE protein probably delivers the nickel.

It localises to the cytoplasm. Functionally, required for maturation of urease via the functional incorporation of the urease nickel metallocenter. The protein is Urease accessory protein UreD of Cereibacter sphaeroides (strain ATCC 17029 / ATH 2.4.9) (Rhodobacter sphaeroides).